Here is a 387-residue protein sequence, read N- to C-terminus: Pepsin II-1 (387 aa).

The N-terminal stretch at 1–15 (MKWLLLLGLLALSEC) is a signal peptide. Residues 16–59 (IVHKVPLVRKKSLRKNLIEKGLLQDYLKTHTPNLATKYFPKETF) constitute a propeptide, activation peptide. One can recognise a Peptidase A1 domain in the interval 75–384 (YFGTISIGTP…DRANNQVGLA (310 aa)). Residue Asp93 is part of the active site. Cys106 and Cys111 are joined by a disulfide. At Ser129 the chain carries Phosphoserine. A disulfide bridge links Cys267 with Cys271. Asp276 is an active-site residue. A disulfide bond links Cys310 and Cys343.

Belongs to the peptidase A1 family.

The protein resides in the secreted. The enzyme catalyses Preferential cleavage: hydrophobic, preferably aromatic, residues in P1 and P1' positions. Cleaves 1-Phe-|-Val-2, 4-Gln-|-His-5, 13-Glu-|-Ala-14, 14-Ala-|-Leu-15, 15-Leu-|-Tyr-16, 16-Tyr-|-Leu-17, 23-Gly-|-Phe-24, 24-Phe-|-Phe-25 and 25-Phe-|-Tyr-26 bonds in the B chain of insulin.. In terms of biological role, shows particularly broad specificity; although bonds involving phenylalanine and leucine are preferred, many others are also cleaved to some extent. This Oryctolagus cuniculus (Rabbit) protein is Pepsin II-1.